The following is a 379-amino-acid chain: ATP phosphoribosyltransferase regulatory subunit (379 aa).

Belongs to the class-II aminoacyl-tRNA synthetase family. HisZ subfamily. In terms of assembly, heteromultimer composed of HisG and HisZ subunits.

It localises to the cytoplasm. It participates in amino-acid biosynthesis; L-histidine biosynthesis; L-histidine from 5-phospho-alpha-D-ribose 1-diphosphate: step 1/9. Required for the first step of histidine biosynthesis. May allow the feedback regulation of ATP phosphoribosyltransferase activity by histidine. This chain is ATP phosphoribosyltransferase regulatory subunit, found in Paramagnetospirillum magneticum (strain ATCC 700264 / AMB-1) (Magnetospirillum magneticum).